The following is a 217-amino-acid chain: Claudin-9 (217 aa).

Topologically, residues 1 to 7 (MASTGLE) are cytoplasmic. The helical transmembrane segment at 8 to 28 (LLGMTLAVLGWLGTLVSCALP) threads the bilayer. The Extracellular segment spans residues 29 to 81 (LWKVTAFIGNSIVVAQVVWEGLWMSCVVQSTGQMQCKVYDSLLALPQDLQAAR). A helical membrane pass occupies residues 82–102 (ALCVIALLLALLGLLVAITGA). Over 103-116 (QCTTCVEDEGAKAR) the chain is Cytoplasmic. Residues 117 to 137 (IVLTAGVILLLAGILVLIPVC) form a helical membrane-spanning segment. The Extracellular portion of the chain corresponds to 138 to 159 (WTAHAIIQDFYNPLVAEALKRE). Residues 160–180 (LGASLYLGWAAAALLMLGGGL) traverse the membrane as a helical segment. Topologically, residues 181-217 (LCCTCPPPQVERPRGPRLGYSIPSRSGASGLDKRDYV) are cytoplasmic. Positions 194–217 (RGPRLGYSIPSRSGASGLDKRDYV) are disordered.

The protein belongs to the claudin family. In terms of assembly, interacts with CLDN1, CD81 and OCLN. Expressed in the liver, in peripheral blood mononuclear cells and hepatocarcinoma cell lines.

Its subcellular location is the cell junction. The protein localises to the tight junction. The protein resides in the cell membrane. Plays a major role in tight junction-specific obliteration of the intercellular space, through calcium-independent cell-adhesion activity. Its function is as follows. (Microbial infection) Acts as a receptor for hepatitis C virus (HCV) entry into hepatic cells. The sequence is that of Claudin-9 (CLDN9) from Homo sapiens (Human).